The primary structure comprises 169 residues: YEDRNFQGRCYECSGDCADLHSYFSRCNSIKVDSGCWMLYERPNFLGHQYFLKKGEYPDYQQWMGFSDSVRSCKVIPQQKGPHKMKIYEKEELKGQMLEVLEDCPSVFELFKNHDINSCNVLEGHWIFYEQPNYRGRQYFLKPGEYKRFSDWGSLNARVSSFRRVLDSC.

2 Beta/gamma crystallin 'Greek key' domains span residues 1–34 (YEDRNFQGRCYECSGDCADLHSYFSRCNSIKVDS) and 35–77 (GCWM…KVIP). Positions 78 to 82 (QQKGP) are connecting peptide. 2 consecutive Beta/gamma crystallin 'Greek key' domains span residues 83–123 (HKMK…NVLE) and 124–166 (GHWI…RRVL).

The protein belongs to the beta/gamma-crystallin family. In terms of assembly, monomer.

In terms of biological role, crystallins are the dominant structural components of the vertebrate eye lens. This Rana temporaria (European common frog) protein is Gamma-crystallin 2.